We begin with the raw amino-acid sequence, 570 residues long: MGFLQLLVVAVLASEHRVAGAAEVFGNSSEGLIEFSVGKFRYFELNRPFPEEAILHDISSNVTFLIFQIHSQYQNTTVSFSPTLLSNSSETGTASGLVFILRPEQSTCTWYLGTSGIQPVQNMAILLSYSERDPVPGGCNLEFDLDIDPNIYLEYNFFETTIKFAPANLGYARGVDPPPCDAGTDQDSRWRLQYDVYQYFLPENDLTEEMLLKHLQRMVSVPQVKASALKVVTLTANDKTSVSFSSLPGQGVIYNVIVWDPFLNTSAAYIPAHTYACSFEAGEGSCASLGRVSSKVFFTLFALLGFFICFFGHRFWKTELFFIGFIIMGFFFYILITRLTPIKYDVNLILTAVTGSVGGMFLVAVWWRFGILSICMLCVGLVLGFLISSVTFFTPLGNLKIFHDDGVFWVTFSCIAILIPVVFMGCLRILNILTCGVIGSYSVVLAIDSYWSTSLSYITLNVLKRALNKDFHRAFTNVPFQTNDFIILAVWGMLAVSGITLQIRRERGRPFFPPHPYKLWKQERERRVTNILDPSYHIPPLRERLYGRLTQIKGLFQKEQPAGERTPLLL.

An N-terminal signal peptide occupies residues 1–21; the sequence is MGFLQLLVVAVLASEHRVAGA. Residues Asn-27, Asn-61, Asn-75, Asn-87, and Asn-264 are each glycosylated (N-linked (GlcNAc...) asparagine). Helical transmembrane passes span 296 to 313, 320 to 342, 347 to 369, 371 to 393, 408 to 430, 437 to 459, and 479 to 501; these read VFFTLFALLGFFICFFGH, LFFIGFIIMGFFFYILITRLTPI, NLILTAVTGSVGGMFLVAVWWRF, ILSICMLCVGLVLGFLISSVTFF, FWVTFSCIAILIPVVFMGCLRIL, VIGSYSVVLAIDSYWSTSLSYIT, and PFQTNDFIILAVWGMLAVSGITL.

As to expression, widely expressed. Highly expressed in kidney and pancreas.

It localises to the cell membrane. In terms of biological role, involved in the inhibition of cytokine-induced death of pancreatic beta cells. Involved in the promotion of insulin secretion from pancreatic beta cells. Is a downstream transcriptional target of p53/TP53, and acts as a pro-survival homeostatic factor that attenuates the development of cellular stress. Maintains protein homeostasis and promotes cell survival through attenuation of endoplasmic reticulum (ER) stress and the subsequent induction of unfolded protein response (UPR). This is Transmembrane 7 superfamily member 3 (TM7SF3) from Homo sapiens (Human).